Here is a 424-residue protein sequence, read N- to C-terminus: Isoflavipucine cluster transcription factor ATEG_00326 (424 aa).

Residues 10-38 (CDRCHGQKLRCIHSGGGPCVRCAKAKATC) constitute a DNA-binding region (zn(2)-C6 fungal-type). The segment at 265–286 (ARMQTPEGTPERTSESSPSGPP) is disordered.

It is found in the nucleus. Transcription factor that regulates the expression of the gene cluster that mediates the biosynthesis of isoflavipucine. The chain is Isoflavipucine cluster transcription factor ATEG_00326 from Aspergillus terreus (strain NIH 2624 / FGSC A1156).